We begin with the raw amino-acid sequence, 967 residues long: RNA polymerase-associated protein RapA (967 aa).

The Helicase ATP-binding domain occupies 163–333 (EVGQRHAPRV…FARLRLLDPN (171 aa)). 176-183 (DEVGLGKT) contacts ATP. A DEAH box motif is present at residues 279-282 (DEAH). In terms of domain architecture, Helicase C-terminal spans 489-643 (RVEWLLNYLT…TCPTGRTIYD (155 aa)).

This sequence belongs to the SNF2/RAD54 helicase family. RapA subfamily. Interacts with the RNAP. Has a higher affinity for the core RNAP than for the holoenzyme. Its ATPase activity is stimulated by binding to RNAP.

Its function is as follows. Transcription regulator that activates transcription by stimulating RNA polymerase (RNAP) recycling in case of stress conditions such as supercoiled DNA or high salt concentrations. Probably acts by releasing the RNAP, when it is trapped or immobilized on tightly supercoiled DNA. Does not activate transcription on linear DNA. Probably not involved in DNA repair. The chain is RNA polymerase-associated protein RapA from Pectobacterium carotovorum subsp. carotovorum (strain PC1).